We begin with the raw amino-acid sequence, 116 residues long: Cystatin (116 aa).

Positions Gln-53–Gly-57 match the Secondary area of contact motif. Intrachain disulfides connect Cys-71-Cys-81 and Cys-95-Cys-115. Residue Ser-80 is modified to Phosphoserine.

Belongs to the cystatin family.

The protein localises to the secreted. Functionally, this protein binds tightly to and inhibits papain and cathepsin B. This Coturnix japonica (Japanese quail) protein is Cystatin.